Reading from the N-terminus, the 1782-residue chain is AF4/FMR2 family member lilli (1782 aa).

Disordered regions lie at residues 42–84, 150–313, 434–515, 605–637, 691–732, 768–820, 839–891, 911–1064, 1091–1126, 1166–1234, 1296–1327, 1386–1420, 1450–1484, and 1674–1701; these read NMED…PSEG, ASSS…PPPE, MPTP…QQQQ, GGSS…NLSR, EKLH…QQRY, GALP…LQIP, KVQP…SNKK, VAAA…AAAS, AGNS…QHKQ, LPQS…KQGQ, ARQH…TPKD, LKQE…EQLS, QESA…QQQQ, and GNTP…GKIV. Over residues 54–80 the composition is skewed to basic and acidic residues; that stretch reads REKYERQQGIQSDDRETSLFGEPRRLN. 2 stretches are compositionally biased toward low complexity: residues 164 to 180 and 211 to 260; these read QQQQ…QQQQ and PSSS…MSSP. The span at 435 to 447 shows a compositional bias: pro residues; it reads PTPPKASPTPPAI. T443 is modified (phosphothreonine). Basic and acidic residues predominate over residues 450-463; the sequence is MKTEKNHSLEKQDS. The span at 465 to 475 shows a compositional bias: acidic residues; sequence LENDLELSESD. Residues S472 and S474 each carry the phosphoserine modification. Composition is skewed to low complexity over residues 484-515 and 609-622; these read SAGN…QQQQ and GSCM…SSSN. The span at 623–634 shows a compositional bias: polar residues; it reads KTPSPTDSNRWN. The span at 691–701 shows a compositional bias: basic and acidic residues; that stretch reads EKLHDEPRHVG. Low complexity-rich tracts occupy residues 714–730 and 782–805; these read QQQQ…QQQQ and SDSG…GGSS. Basic residues predominate over residues 859 to 869; that stretch reads PRQKKPRKKKM. 2 positions are modified to phosphoserine: S878 and S879. Positions 920–932 form a DNA-binding region, a.T hook; that stretch reads KKGRGRPRKQAQQ. Positions 929-972 are enriched in low complexity; sequence QAQQQQQQQQQQLQQSGNLSSASASSSQAKGPTLTAAKKPLAKA. 2 positions are modified to phosphoserine: S949 and S951. Residues 973-982 are compositionally biased toward polar residues; sequence SVSNSNSTAP. Low complexity-rich tracts occupy residues 996 to 1018, 1033 to 1064, 1105 to 1116, and 1174 to 1196; these read SNSS…TMAA, SSSS…AAAS, SVGSSSNSSSSS, and SSSD…SSSS. Residues 1308 to 1318 are compositionally biased toward polar residues; the sequence is AQQNGHLSSRS. The segment covering 1450–1460 has biased composition (polar residues); sequence QESAANGSPNK. The residue at position 1457 (S1457) is a Phosphoserine. 2 stretches are compositionally biased toward low complexity: residues 1461–1484 and 1674–1694; these read LQQQ…QQQQ and GNTP…SGSN.

This sequence belongs to the AF4 family.

It is found in the nucleus. Its function is as follows. Has a role in transcriptional regulation. Acts in parallel with the Ras/MAPK and the PI3K/PKB pathways in the control of cell identity and cellular growth. Essential for regulation of the cytoskeleton and cell growth but not for cell proliferation or growth rate. Required specifically for the microtubule-based basal transport of lipid droplets. Plays a partially redundant function downstream of Raf in cell fate specification in the developing eye. Pair-rule protein that regulates embryonic cellularization, gastrulation and segmentation. This chain is AF4/FMR2 family member lilli, found in Drosophila mojavensis (Fruit fly).